A 245-amino-acid polypeptide reads, in one-letter code: MNVTLLIPARYGSSRFPGKPLAPINGKPMIQHVYERASLAKGLTNIYVATDDDRIKAAVEGFGGKVVMTSPEAASGTDRINDAINQLGLKDDDLVINLQGDQPLIDPTSIEQVISLFERHPGEFEMATLGFEIVNKTELDDPMHVKMVFDNNNYALYFSRSRIPFGRDTQDYPVYKHLGVYAYTRKFVQAFAALPLGRLEDLEKLEQLRALEYGHKIKIAISAFDSIEVDTPEDIRKCEQRLAVD.

The protein belongs to the KdsB family.

The protein localises to the cytoplasm. The enzyme catalyses 8-amino-3,8-dideoxy-alpha-D-manno-octulosonate + CTP = CMP-8-amino-3,8-dideoxy-alpha-D-manno-oct-2-ulosonate + diphosphate. It functions in the pathway bacterial outer membrane biogenesis; lipopolysaccharide biosynthesis. In terms of biological role, activates KDO8N (a required 8-carbon sugar) for incorporation into bacterial lipopolysaccharide in the Shewanella genus. In Shewanella baltica (strain OS185), this protein is 8-amino-3,8-dideoxy-manno-octulosonate cytidylyltransferase.